Reading from the N-terminus, the 360-residue chain is Deoxyhypusine hydroxylase (360 aa).

HEAT-like PBS-type repeat units follow at residues 56 to 82, 89 to 115, and 213 to 245; these read LKHE…ILQD, VRHE…YRSD, and ERYR…GLQD. Residues His-58, Glu-59, His-91, and Glu-92 each coordinate Fe cation. Fe cation is bound by residues His-252, Glu-253, His-285, and Glu-286.

Belongs to the deoxyhypusine hydroxylase family. Fe(2+) is required as a cofactor.

It localises to the cytoplasm. Its subcellular location is the nucleus. The catalysed reaction is [eIF5A protein]-deoxyhypusine + AH2 + O2 = [eIF5A protein]-hypusine + A + H2O. It functions in the pathway protein modification; eIF5A hypusination. Catalyzes the hydroxylation of the N(6)-(4-aminobutyl)-L-lysine intermediate to form hypusine, an essential post-translational modification only found in mature eIF-5A factor. This is Deoxyhypusine hydroxylase from Mycosarcoma maydis (Corn smut fungus).